The chain runs to 492 residues: GTPase-GDP dissociation stimulator arz1 (492 aa).

The protein localises to the cytoplasm. Its subcellular location is the nucleus. Probably acts as a GEF (guanine nucleotide exchange factor) for the Rho family of small GTP-binding proteins (G proteins) that stimulates the dissociation of GDP to enable subsequent binding of GTP. May also chaperone the processing and/or trafficking of small GTPases independently of GEF activity. May be involved in the control of polarized cell growth via CDC42-mediated signaling. May also be involved in the control of cell-wall organization via RHO1-mediated signaling. This chain is GTPase-GDP dissociation stimulator arz1, found in Schizosaccharomyces pombe (strain 972 / ATCC 24843) (Fission yeast).